A 425-amino-acid polypeptide reads, in one-letter code: Glutamyl-tRNA reductase (425 aa).

Residues 47–50 (TCNR), S107, 112–114 (EDQ), and Q118 contribute to the substrate site. C48 serves as the catalytic Nucleophile. 187–192 (GAGHIA) contributes to the NADP(+) binding site.

The protein belongs to the glutamyl-tRNA reductase family. In terms of assembly, homodimer.

It catalyses the reaction (S)-4-amino-5-oxopentanoate + tRNA(Glu) + NADP(+) = L-glutamyl-tRNA(Glu) + NADPH + H(+). Its pathway is porphyrin-containing compound metabolism; protoporphyrin-IX biosynthesis; 5-aminolevulinate from L-glutamyl-tRNA(Glu): step 1/2. It functions in the pathway porphyrin-containing compound metabolism; chlorophyll biosynthesis. Catalyzes the NADPH-dependent reduction of glutamyl-tRNA(Glu) to glutamate 1-semialdehyde (GSA). The chain is Glutamyl-tRNA reductase from Roseiflexus sp. (strain RS-1).